Consider the following 394-residue polypeptide: Hemagglutinin-esterase (394 aa).

An N-terminal signal peptide occupies residues 1 to 16 (MARFIILFLLLAPVYS). Over 17-347 (RLCLRNHPDT…NNRVDAIPPQ (331 aa)) the chain is Extracellular. The active site involves serine 32. The Cell attachment site signature appears at 119-121 (RGD). Active-site residues include aspartate 261 and histidine 264. The N-linked (GlcNAc...) asparagine; by host glycan is linked to asparagine 333. The tract at residues 335–358 (TDVNNRVDAIPPQLSNIFISMGVA) is highly polymorphic region. Residues 348–368 (LSNIFISMGVAGFGIALFLAG) traverse the membrane as a helical segment. The Cytoplasmic segment spans residues 369 to 394 (WKACVWIAAFMYKSRGRNPPANLSVA).

It localises to the host membrane. Its subcellular location is the virion membrane. It catalyses the reaction N-acetyl-9-O-acetylneuraminate + H2O = N-acetylneuraminate + acetate + H(+). The enzyme catalyses N-acetyl-4-O-acetylneuraminate + H2O = N-acetylneuraminate + acetate + H(+). Functionally, performs attachment to host receptor thereby inducing virus particle entry into target cell. Binds specifically to 5-N-acetyl-4-O-acetyl neuraminic acid on host cells, which plays a major role in cell tropism of the virus. ALso mediates de-O-acetylation of N-acetyl-4-O-acetylneuraminic acid. This receptor-destroying activity is important for virus release as it probably helps preventing self-aggregation and ensures the efficient spread of the progeny virus from cell to cell. The highly polymorphic region (HPR) modulates the virulence in host. Catalyzes the removal of terminal sialic acid residues from viral and cellular glycoconjugates. In Gadus morhua (Atlantic cod), this protein is Hemagglutinin-esterase.